The sequence spans 338 residues: MAAGCSEAPRPAAASDGSLVGQAGVLPCLELPTYAAACALVNSRYSCLVAGPHQRHIALSPRYLNRKRTGIREQLDAELLRYSESLLGVPIAYDNIKVVGELGDIYDDQGHIHLNIEADFVIFCPEPGQKLMGIVNKVSSSHIGCLVHGCFNASIPKPEQLSAEQWQTMEINMGDELEFEVFRLDSDAAGVFCIRGKLNITSLQFKRSEVSEEVTENGTEEAAKKPKKKKKKKDPETYEVDSGTTKLADDADDTPMEESALQNTNNANGIWEEEPKKKKKKKKHQEVQDQDPVFQGSDSSGYQSDHKKKKKKRKHSEEAEFTPPLKCSPKRKGKSNFL.

Positions 209 to 338 are disordered; it reads EVSEEVTENG…PKRKGKSNFL (130 aa). Phosphoserine is present on residues serine 242, serine 304, and serine 316. Threonine 322 is subject to Phosphothreonine. Serine 328 carries the phosphoserine modification. Positions 328–338 are enriched in basic residues; it reads SPKRKGKSNFL.

This sequence belongs to the eukaryotic RPA43 RNA polymerase subunit family. In terms of assembly, component of the RNA polymerase I (Pol I) complex consisting of 13 subunits: a ten-subunit catalytic core composed of POLR1A/RPA1, POLR1B/RPA2, POLR1C/RPAC1, POLR1D/RPAC2, POLR1H/RPA12, POLR2E/RPABC1, POLR2F/RPABC2, POLR2H/RPABC3, POLR2K/RPABC4 and POLR2L/RPABC5; a mobile stalk subunit POLR1F/RPA43 protruding from the core and additional subunits homologous to general transcription factors POLR1E/RPA49 and POLR1G/RPA34. Interacts with RRN3/TIF-IA. In terms of tissue distribution, widely expressed. Expressed in all fetal and adult tissues tested, with highest expression in fetal lung, liver, and kidney, and low expression in all adult tissues.

The protein localises to the nucleus. The protein resides in the nucleolus. Component of RNA polymerase I (Pol I), a DNA-dependent RNA polymerase which synthesizes ribosomal RNA precursors using the four ribonucleoside triphosphates as substrates. Through its association with RRN3/TIF-IA may be involved in recruitment of Pol I to rDNA promoters. This chain is DNA-directed RNA polymerase I subunit RPA43, found in Homo sapiens (Human).